A 331-amino-acid polypeptide reads, in one-letter code: Olfactory receptor 6B3 (331 aa).

Over 1–25 (MSGENVTRVGTFILVGFPTAPGLQY) the chain is Extracellular. N-linked (GlcNAc...) asparagine glycosylation is present at Asn5. The chain crosses the membrane as a helical span at residues 26-46 (LLFLLFLLTYLFVLVENLAII). Over 47-54 (LTVWSSTS) the chain is Cytoplasmic. The helical transmembrane segment at 55–75 (LHRPMYYFLSSMSFLEIWYVS) threads the bilayer. The Extracellular segment spans residues 76 to 99 (DITPKMLEGFLLQQKRISFVGCMT). An intrachain disulfide couples Cys97 to Cys189. The helical transmembrane segment at 100-120 (QLYFFSSLVCTECVLLASMAY) threads the bilayer. Residues 121–139 (DRYVAICHPLRYHVLVTPG) are Cytoplasmic-facing. Residues 140-160 (LCLQLVGFSFVSGFTISMIKV) form a helical membrane-spanning segment. At 161 to 196 (CFISSVTFCGSNVLNHFFCDISPILKLACTDFSTAE) the chain is on the extracellular side. Residues 197-217 (LVDFILAFIILVFPLLATMLS) traverse the membrane as a helical segment. Residues 218–237 (YAHITLAVLRIPSATGCWRA) lie on the Cytoplasmic side of the membrane. Residues 238 to 258 (FFTCASHLTVVTVFYTALLFM) form a helical membrane-spanning segment. Over 259-271 (YVRPQAIDSRSSN) the chain is Extracellular. The helical transmembrane segment at 272–292 (KLISVLYTVITPILNPLIYCL) threads the bilayer. Residues 293–331 (RNKEFKNALKKAFGLTSCAVEGRLSSLLELHLQIHSQPL) lie on the Cytoplasmic side of the membrane.

This sequence belongs to the G-protein coupled receptor 1 family.

It is found in the cell membrane. Odorant receptor. This Homo sapiens (Human) protein is Olfactory receptor 6B3 (OR6B3).